The primary structure comprises 808 residues: Aminotransferase ALT4 (808 aa).

Belongs to the class-II pyridoxal-phosphate-dependent aminotransferase family. BioF subfamily. Pyridoxal 5'-phosphate is required as a cofactor.

It participates in mycotoxin biosynthesis. Functionally, aminotransferase; part of the gene cluster that mediates the biosynthesis of the host-selective toxins (HSTs) AAL-toxins, sphinganine-analog mycotoxins responsible for Alternaria stem canker on tomato by the tomato pathotype. The biosynthesis starts with the polyketide synthase ALT1-catalyzed C-16 carbon chain assembly from one starter acetyl-CoA unit with malonyl-CoA extender units. ALT1 also selectively transfers methyl groups at the first and the third cycle of chain elongation for AAL toxin. The C-16 polyketide chain is released from the enzyme by a nucleophilic attack of a carbanion, which is derived from R-carbon of glycin by decarboxylation, on the carbonyl carbon of polyketide acyl chain. This step is probably catalyzed by a pyridoxal 5'-phosphate-dependent aminoacyl transferase ALT4. The respective functions of the other enzymes encoded by the cluster have still to be elucidated. The sphingosine N-acyltransferase-like protein ALT7 seems not to act as a resistance/self-tolerance factor against the toxin in the toxin biosynthetic gene cluster, contrary to what is expected. This is Aminotransferase ALT4 from Alternaria alternata (Alternaria rot fungus).